Consider the following 211-residue polypeptide: Dof zinc finger protein 5 (211 aa).

The interval 37–101 is disordered; that stretch reads FVVAREKVEP…QRRLQDSAEA (65 aa). Basic and acidic residues predominate over residues 68–80; the sequence is IKREAADRDEEQR. Residues 109-163 form a Dof-type zinc finger; sequence LPCPRCRSRDTKFCYFNNYNVNQPRHFCKACHRYWTAGGALRNVPVGAGRRKNRP. Positions 111, 114, 136, and 139 each coordinate Zn(2+). Residues 191–211 form a disordered region; sequence SPTSPSPVYTDRWPVTPDRPF.

The protein localises to the nucleus. Functionally, transcription factor that may transactivate seed storage protein genes in developing seeds. This chain is Dof zinc finger protein 5, found in Oryza sativa subsp. japonica (Rice).